A 152-amino-acid polypeptide reads, in one-letter code: UPF0266 membrane protein YobD (152 aa).

A run of 3 helical transmembrane segments spans residues 6-26, 45-65, and 67-87; these read LVLI…QFIM, IDSV…VTNH, and ALIT…IFWI.

The protein belongs to the UPF0266 family.

Its subcellular location is the cell inner membrane. This chain is UPF0266 membrane protein YobD, found in Escherichia coli O157:H7 (strain EC4115 / EHEC).